The chain runs to 70 residues: MKFLVNVALVFMVVYISFIYAAPEPEPAPEAEAEADAEADPEAGIGAVLKVLATGLPALISWIKRKRQQG.

Residues M1–A21 form the signal peptide. The propeptide at A22 to A43 is removed by a dipeptidylpeptidase. Residue G44 is modified to N-formylglycine; partial. The residue at position 69 (Q69) is a Glutamine amide.

Belongs to the melittin family. As to quaternary structure, monomer (in solution and for integration into membranes), homotetramer (in solution and potentially as a toroidal pore in membranes), and potenially homomultimer (as a toroidal pore in membranes). In terms of tissue distribution, expressed by the venom gland.

The protein resides in the secreted. It is found in the target cell membrane. Functionally, main toxin of bee venom with strong hemolytic activity and antimicrobial activity. It has enhancing effects on bee venom phospholipase A2 activity. This amphipathic toxin binds to negatively charged membrane surface and forms pore by inserting into lipid bilayers inducing the leakage of ions and molecules and the enhancement of permeability that ultimately leads to cell lysis. It acts as a voltage-gated pore with higher selectivity for anions over cations. The ion conductance has been shown to be voltage-dependent. Self-association of melittin in membranes is promoted by high ionic strength, but not by the presence of negatively charged lipids. In vivo, intradermal injection into healthy human volunteers produce sharp pain sensation and an inflammatory response. It produces pain by activating primary nociceptor cells directly and indirectly due to its ability to activate plasma membrane phospholipase A2 and its pore-forming activity. In Polistes hebraeus (Paper wasp), this protein is Melittin (MELT).